We begin with the raw amino-acid sequence, 506 residues long: Dipeptide and tripeptide permease A (506 aa).

Over 1-36 (MSTANNNSESTESVSMNAFKQPKAFYLIFSIELWER) the chain is Cytoplasmic. The chain crosses the membrane as a helical span at residues 37–57 (FGYYGLQGIMAVYLVKMLGMS). At 58–61 (ETDS) the chain is on the periplasmic side. A helical membrane pass occupies residues 62-82 (ITLFSSFSALVYGFVAIGGWL). The Cytoplasmic segment spans residues 83-91 (GDKVLGTKR). 2 helical membrane-spanning segments follow: residues 92 to 112 (VIVL…YSGH) and 113 to 133 (SVAW…LFKA). At 134–155 (NPSALLSTCYAKDDPRLDGAFT) the chain is on the cytoplasmic side. The chain crosses the membrane as a helical span at residues 156 to 176 (MYYMAVNIGSFFSMLATPVLA). Topologically, residues 177-180 (ANYG) are periplasmic. A helical membrane pass occupies residues 181 to 201 (WSVAFSLSVVGMILTLVNFMF). Over 202–222 (CRKWVSTQGSQPDFQPINLKK) the chain is Cytoplasmic. The chain crosses the membrane as a helical span at residues 223 to 243 (LVITLAGIVVLVALSTWLLHN). Residues 244 to 248 (QGVAR) lie on the Periplasmic side of the membrane. The chain crosses the membrane as a helical span at residues 249–269 (WILTIISLAVVAIFIKEMLAV). Residues 270 to 276 (SGAERRK) are Cytoplasmic-facing. Residues 277 to 297 (MIVALLLMLEAVVFFVLYNQM) form a helical membrane-spanning segment. The Periplasmic segment spans residues 298-322 (PTSLNFFAIRNVEHSILGFAFEPEQ). Residues 323-343 (YQALNPFWIMVASPLLAAVYN) traverse the membrane as a helical segment. At 344–354 (KMGDQLPMAHK) the chain is on the cytoplasmic side. Residues 355 to 375 (FAIGMVLCSGAFLVLPWGASM) traverse the membrane as a helical segment. At 376 to 385 (ANEQGIVSVN) the chain is on the periplasmic side. A helical transmembrane segment spans residues 386 to 406 (WLILCYGLQSIGELMISGLGL). At 407-416 (AMVAQLVPQR) the chain is on the cytoplasmic side. A helical membrane pass occupies residues 417–437 (LMGFIMGAWFLTSAGAAIIAG). The Periplasmic portion of the chain corresponds to 438-461 (YVANMMAVPENVVDPHVSLEVYSN). The helical transmembrane segment at 462-482 (VFMQIGIVTGIIAVLMMLTAP) threads the bilayer. The Cytoplasmic portion of the chain corresponds to 483-506 (KLTRMTQDVATDVPADAATTTASA).

It belongs to the major facilitator superfamily. Proton-dependent oligopeptide transporter (POT/PTR) (TC 2.A.17) family. DtpA subfamily.

Its subcellular location is the cell inner membrane. Proton-dependent permease that transports di- and tripeptides. The protein is Dipeptide and tripeptide permease A of Pectobacterium carotovorum subsp. carotovorum (strain PC1).